A 436-amino-acid chain; its full sequence is Proline--tRNA ligase (436 aa).

The protein belongs to the class-II aminoacyl-tRNA synthetase family. ProS type 2 subfamily. In terms of assembly, homodimer.

Its subcellular location is the cytoplasm. The catalysed reaction is tRNA(Pro) + L-proline + ATP = L-prolyl-tRNA(Pro) + AMP + diphosphate. Functionally, catalyzes the attachment of proline to tRNA(Pro) in a two-step reaction: proline is first activated by ATP to form Pro-AMP and then transferred to the acceptor end of tRNA(Pro). The polypeptide is Proline--tRNA ligase (Neorickettsia sennetsu (strain ATCC VR-367 / Miyayama) (Ehrlichia sennetsu)).